Here is a 179-residue protein sequence, read N- to C-terminus: tRNA (cytidine(56)-2'-O)-methyltransferase (179 aa).

Residues L82, 110–114, and 128–135 contribute to the S-adenosyl-L-methionine site; these read GAEKV and VGNQPHSE.

This sequence belongs to the aTrm56 family. In terms of assembly, homodimer.

The protein resides in the cytoplasm. The catalysed reaction is cytidine(56) in tRNA + S-adenosyl-L-methionine = 2'-O-methylcytidine(56) in tRNA + S-adenosyl-L-homocysteine + H(+). Specifically catalyzes the AdoMet-dependent 2'-O-ribose methylation of cytidine at position 56 in tRNAs. The sequence is that of tRNA (cytidine(56)-2'-O)-methyltransferase from Methanocaldococcus jannaschii (strain ATCC 43067 / DSM 2661 / JAL-1 / JCM 10045 / NBRC 100440) (Methanococcus jannaschii).